The following is a 427-amino-acid chain: Histidine--tRNA ligase (427 aa).

It belongs to the class-II aminoacyl-tRNA synthetase family. Homodimer.

The protein localises to the cytoplasm. It catalyses the reaction tRNA(His) + L-histidine + ATP = L-histidyl-tRNA(His) + AMP + diphosphate + H(+). The sequence is that of Histidine--tRNA ligase from Proteus mirabilis (strain HI4320).